The primary structure comprises 264 residues: Glutamate racemase (264 aa).

Substrate is bound by residues 10 to 11 and 42 to 43; these read DS and YG. The active-site Proton donor/acceptor is the C73. Position 74–75 (74–75) interacts with substrate; the sequence is NT. Catalysis depends on C183, which acts as the Proton donor/acceptor. 184-185 contributes to the substrate binding site; that stretch reads TH.

Belongs to the aspartate/glutamate racemases family.

It catalyses the reaction L-glutamate = D-glutamate. It participates in cell wall biogenesis; peptidoglycan biosynthesis. Functionally, provides the (R)-glutamate required for cell wall biosynthesis. This is Glutamate racemase from Streptococcus pyogenes serotype M49 (strain NZ131).